A 220-amino-acid polypeptide reads, in one-letter code: Adenylate kinase (220 aa).

Residue 10–15 participates in ATP binding; the sequence is GAGKGT. The tract at residues 30 to 59 is NMP; the sequence is STGDMLRAAVKAGSPLGVEAKGYMDAGKLV. AMP is bound by residues T31, R36, 57 to 59, 85 to 88, and Q92; these read KLV and GFPR. The interval 122 to 159 is LID; it reads GRRTHPASGRTYHVKFNPPKVEGKDDVTGEPLIQRDDD. Residues R123 and 132-133 each bind ATP; that span reads TY. Residues R156 and R167 each coordinate AMP. G206 contacts ATP.

Belongs to the adenylate kinase family. As to quaternary structure, monomer.

The protein resides in the cytoplasm. It carries out the reaction AMP + ATP = 2 ADP. Its pathway is purine metabolism; AMP biosynthesis via salvage pathway; AMP from ADP: step 1/1. Functionally, catalyzes the reversible transfer of the terminal phosphate group between ATP and AMP. Plays an important role in cellular energy homeostasis and in adenine nucleotide metabolism. This chain is Adenylate kinase, found in Burkholderia ambifaria (strain ATCC BAA-244 / DSM 16087 / CCUG 44356 / LMG 19182 / AMMD) (Burkholderia cepacia (strain AMMD)).